A 144-amino-acid chain; its full sequence is Toxin MT0934 (144 aa).

Toxic component of a type II toxin-antitoxin (TA) system. Its toxic effect is neutralized by coexpression with cognate antitoxin MT0933. The sequence is that of Toxin MT0934 from Mycobacterium tuberculosis (strain CDC 1551 / Oshkosh).